Reading from the N-terminus, the 594-residue chain is TOX high mobility group box family member 4-B (594 aa).

Disordered stretches follow at residues 160 to 225 (GTIL…PQKP) and 522 to 545 (ESPP…SPQC). Residues 207 to 217 (KPKTPKKKKKK) are compositionally biased toward basic residues. The Nuclear localization signal signature appears at 212-217 (KKKKKK). Residues 222–290 (PQKPLSAYAL…EYLKALALYK (69 aa)) constitute a DNA-binding region (HMG box).

In terms of assembly, component of the PNUTS-PP1 phosphatase complex.

The protein resides in the nucleus. It is found in the chromosome. In terms of biological role, transcription factor that modulates cell fate reprogramming from the somatic state to the pluripotent and neuronal fate. Also acts as a regulatory component of protein phosphatase 1 (PP1) complexes. Component of the PNUTS-PP1 protein phosphatase complex, a PP1 complex that regulates RNA polymerase II transcription pause-release. PNUTS-PP1 also plays a role in the control of chromatin structure and cell cycle progression during the transition from mitosis into interphase. The chain is TOX high mobility group box family member 4-B (tox4-b) from Xenopus laevis (African clawed frog).